Consider the following 130-residue polypeptide: Small ribosomal subunit protein uS8x (130 aa).

The protein belongs to the universal ribosomal protein uS8 family.

This Arabidopsis thaliana (Mouse-ear cress) protein is Small ribosomal subunit protein uS8x (RPS15AD).